The chain runs to 246 residues: MQPFLLLLAFLLTPGAGTEEIIGGHEAKPHSRPYMAFVQFLQEKSRKRCGGILVRKDFVLTAAHCQGSSINVTLGAHNIKEQERTQQFIPVKRPIPHPAYNPKNFSNDIMLLQLERKAKWTTAVRPLRLPSSKAQVKPGQLCSVAGWGYVSMSTLATTLQEVLLTVQKDCQCERLFHGNYSRATEICVGDPKKTQTGFKGDSGGPLVCKDVAQGILSYGNKKGTPPGVYIKVSHFLPWIKRTMKRL.

Residues 1–18 (MQPFLLLLAFLLTPGAGT) form the signal peptide. Residues 19–20 (EE) constitute a propeptide, activation peptide. Positions 21–244 (IIGGHEAKPH…FLPWIKRTMK (224 aa)) constitute a Peptidase S1 domain. Positions 46 to 48 (RKR) are mediates the preference for acidic residues at the P3' and P4' sites. An intrachain disulfide couples Cys49 to Cys65. Residue His64 is the Charge relay system of the active site. 2 N-linked (GlcNAc...) asparagine glycosylation sites follow: Asn71 and Asn104. Asp108 acts as the Charge relay system in catalysis. 2 disulfides stabilise this stretch: Cys142–Cys208 and Cys172–Cys187. An N-linked (GlcNAc...) asparagine glycan is attached at Asn179. Ser202 functions as the Charge relay system in the catalytic mechanism.

It belongs to the peptidase S1 family. Granzyme subfamily. In terms of tissue distribution, constitutively expressed in NK cells.

It is found in the cytolytic granule. Its activity is regulated as follows. Inhibited by SERPINB1. Cytotoxic chymotrypsin-like serine protease with preference for bulky and aromatic residues at the P1 position and acidic residues at the P3' and P4' sites. Probably necessary for target cell lysis in cell-mediated immune responses. Participates in the antiviral response via direct cleavage of several proteins essential for viral replication. The polypeptide is Granzyme H (GZMH) (Homo sapiens (Human)).